The sequence spans 506 residues: Histidine ammonia-lyase (506 aa).

Residues 143 to 145 (ASG) constitute a cross-link (5-imidazolinone (Ala-Gly)). 2,3-didehydroalanine (Ser) is present on Ser-144.

The protein belongs to the PAL/histidase family. Contains an active site 4-methylidene-imidazol-5-one (MIO), which is formed autocatalytically by cyclization and dehydration of residues Ala-Ser-Gly.

It is found in the cytoplasm. The catalysed reaction is L-histidine = trans-urocanate + NH4(+). It participates in amino-acid degradation; L-histidine degradation into L-glutamate; N-formimidoyl-L-glutamate from L-histidine: step 1/3. This chain is Histidine ammonia-lyase, found in Salmonella paratyphi C (strain RKS4594).